The chain runs to 456 residues: Serine/threonine-protein kinase meng-po (456 aa).

Residues 15-78 (RSFGDGGSTN…RSSIYKKPDK (64 aa)) form a disordered region. A compositionally biased stretch (low complexity) spans 22–55 (STNSRNSNNNSSTCTNHNNQKRCSTPLTPTSTST). A Protein kinase domain is found at 101–367 (YNIEKTLAEG…VAKYMKDRWV (267 aa)). ATP is bound by residues 107 to 115 (LAEGCFAKI) and lysine 130. Aspartate 221 acts as the Proton acceptor in catalysis. At serine 334 the chain carries Phosphoserine; by PKA.

The protein belongs to the protein kinase superfamily. Ser/Thr protein kinase family. The cofactor is Mg(2+). As to expression, expressed in the mushroom bodies (at protein level).

It carries out the reaction L-seryl-[protein] + ATP = O-phospho-L-seryl-[protein] + ADP + H(+). The enzyme catalyses L-threonyl-[protein] + ATP = O-phospho-L-threonyl-[protein] + ADP + H(+). Activated by Pka-C1-mediated phosphorylation of Ser-334. Functionally, serine/threonine-protein kinase involved in memory formation. Together with the cAMP-dependent protein kinase A Pka-C1, promotes long-term memory (LTM) by regulating CrebB stability and activity. Involved in the maintenance of anesthesia-sensitive memory (ASM) which includes short-term memory (STM) and middle-term memory (MTM). This Drosophila melanogaster (Fruit fly) protein is Serine/threonine-protein kinase meng-po.